The following is a 258-amino-acid chain: U6 snRNA phosphodiesterase 1 (258 aa).

Positions 1–20 (MALVDYGGSSSSASEDEDCT) are disordered. His-117 functions as the Proton acceptor in the catalytic mechanism. Residues 117–119 (HLS), Tyr-200, and 202–208 (PASFHVS) each bind AMP. UMP-binding positions include Tyr-200 and 204-208 (SFHVS). The active-site Proton donor is His-206.

The protein belongs to the 2H phosphoesterase superfamily. USB1 family.

It localises to the nucleus. It catalyses the reaction a 3'-end uridylyl-uridine-RNA = a 3'-end 2',3'-cyclophospho-uridine-RNA + uridine. 3'-5' RNA exonuclease that trims the 3' end of oligo(U) tracts of the pre-U6 small nuclear RNA (snRNA) molecule, leading to the formation of a mature U6 snRNA 3' end-terminated with a 2',3'-cyclic phosphate. Participates in the U6 snRNA 3' end processing that prevents U6 snRNA degradation. This Drosophila melanogaster (Fruit fly) protein is U6 snRNA phosphodiesterase 1.